The primary structure comprises 828 residues: Protein TAPT1 homolog (828 aa).

Composition is skewed to low complexity over residues 67 to 83 (NNNN…GNHI), 212 to 233 (QQTQ…SQQP), and 302 to 321 (SNNN…NNNN). Disordered regions lie at residues 67–92 (NNNN…NSSG), 212–236 (QQTQ…PFSY), and 297–346 (QTTP…TSSI). The next 5 membrane-spanning stretches (helical) occupy residues 428 to 448 (ISFG…FLPI), 472 to 492 (QIFD…LNFI), 562 to 582 (ILGP…HSLV), 722 to 742 (SSWG…SIVV), and 754 to 774 (IFGI…KIFI). Positions 797-822 (LSSSSSSSSSNSLNTTSTTSTSTSTT) are enriched in low complexity. Residues 797 to 828 (LSSSSSSSSSNSLNTTSTTSTSTSTTNDKKNN) are disordered.

It belongs to the TAPT1 family.

The protein resides in the membrane. This is Protein TAPT1 homolog from Dictyostelium discoideum (Social amoeba).